Reading from the N-terminus, the 427-residue chain is CD209 antigen (427 aa).

Residues Met1–Cys37 are Cytoplasmic-facing. 3 short sequence motifs (endocytosis signal) span residues Leu14–Leu15, Glu16–Glu18, and Tyr31–Leu34. Residues Leu38–Val58 traverse the membrane as a helical; Signal-anchor for type II membrane protein segment. Residues Gln59 to Glu427 are Extracellular-facing. A glycan (N-linked (GlcNAc...) asparagine) is linked at Asn80. Repeat copies occupy residues Lys96 to Ser118, Lys119 to Ser141, Lys142 to Ser164, Lys165 to Ser187, Lys188 to Ser210, Lys211 to Ser233, Lys234 to Ser256, and Lys257 to Pro280. Residues Lys96–Pro280 are 8 X approximate tandem repeats. Disulfide bonds link Cys279–Cys290, Cys307–Cys400, and Cys379–Cys392. A C-type lectin domain is found at Phe286–Lys401. Positions 370, 372, 374, 377, 388, and 389 each coordinate Ca(2+).

In terms of assembly, homotetramer. Interacts with C1QBP; the interaction is indicative for a C1q:C1QBP:CD209 signaling complex. Interacts with ICAM2 and ICAM3 by binding to mannose-like carbohydrates. Interacts (via C-type lectin domain) with CEACAM1 (via Lewis X moieties); this interaction is regulated by the glycosylation pattern of CEACAM1 on cell types and regulates contact between dendritic cells and neutrophils.

The protein localises to the membrane. In terms of biological role, pathogen-recognition receptor expressed on the surface of immature dendritic cells (DCs) and involved in initiation of primary immune response. Thought to mediate the endocytosis of pathogens which are subsequently degraded in lysosomal compartments. The receptor returns to the cell membrane surface and the pathogen-derived antigens are presented to resting T-cells via MHC class II proteins to initiate the adaptive immune response. Probably recognizes in a calcium-dependent manner high mannose N-linked oligosaccharides in a variety of pathogen antigens. Its function is as follows. On DCs it is a high affinity receptor for ICAM2 and ICAM3 by binding to mannose-like carbohydrates. May act as a DC rolling receptor that mediates transendothelial migration of DC presursors from blood to tissues by binding endothelial ICAM2. Seems to regulate DC-induced T-cell proliferation by binding to ICAM3 on T-cells in the immunological synapse formed between DC and T-cells. The sequence is that of CD209 antigen (CD209) from Gorilla gorilla gorilla (Western lowland gorilla).